A 300-amino-acid polypeptide reads, in one-letter code: Protein Bel-1 (300 aa).

A disordered region spans residues 1–50; that stretch reads MDSYEKEESVASTSGIQDLQTLSELVGPENAGEGELTIAEEPEENPRRPR. Positions 10–23 are enriched in polar residues; it reads VASTSGIQDLQTLS. The DNA-binding element occupies 89–200; that stretch reads SKSLCKRLIL…SEGPKPRPRH (112 aa). The interval 209–244 is disordered; sequence FEKHHKPRQKRPRRRSIDNESCASSSDTMANEPGSL. A compositionally biased stretch (basic residues) spans 211 to 222; it reads KHHKPRQKRPRR. Positions 214 to 223 match the Nuclear localization signal motif; that stretch reads KPRQKRPRRR. A transactivation domain region spans residues 224 to 300; the sequence is SIDNESCASS…PSGSGEHSVL (77 aa). Polar residues predominate over residues 227-237; it reads NESCASSSDTM.

In terms of assembly, homodimer or homomultimer. Forms complexes with the host nuclear factors NFIA, NFIB, NFIC or NFIX.

The protein localises to the host nucleus. Functionally, transcriptional transactivator that activates the viral internal promoter (IP), thereby enhancing its own expression. This transactivation is repressed by nuclear factor I. Also transactivates the long terminal repeat (LTR) promoter, thereby inducing structural gene expression, initiating the late phase of infection. It is therefore a key regulator of viral gene expression. It directly binds to and activates DNA target sites of viral promoters and those of distinct cellular genes. Required for viral replication. In Human spumaretrovirus (SFVcpz(hu)), this protein is Protein Bel-1 (bel1).